The primary structure comprises 219 residues: Uracil-DNA glycosylase (219 aa).

D61 acts as the Proton acceptor in catalysis.

The protein belongs to the uracil-DNA glycosylase (UDG) superfamily. UNG family.

It localises to the cytoplasm. It catalyses the reaction Hydrolyzes single-stranded DNA or mismatched double-stranded DNA and polynucleotides, releasing free uracil.. Excises uracil residues from the DNA which can arise as a result of misincorporation of dUMP residues by DNA polymerase or due to deamination of cytosine. This is Uracil-DNA glycosylase from Haemophilus influenzae (strain 86-028NP).